We begin with the raw amino-acid sequence, 369 residues long: CLIP domain-containing serine protease HP8 (369 aa).

The N-terminal stretch at 1-24 is a signal peptide; that stretch reads MKTPFEKIRIISCILVIVSTNVVG. Positions 25–81 are excised as a propeptide; the sequence is QKCNGGANCIPLEECTDLFQQLKQGNSPQLTRLLRGLHCGFEDLNSPKICCPPEFLA. A Clip domain is found at 26-75; it reads KCNGGANCIPLEECTDLFQQLKQGNSPQLTRLLRGLHCGFEDLNSPKICC. Cystine bridges form between C27–C74, C33–C63, C39–C75, C105–C239, C142–C158, C186–C191, C286–C303, and C313–C344. A Peptidase S1 domain is found at 113 to 368; the sequence is IFGGIQTEID…FMDWILSKLE (256 aa). The active-site Charge relay system is the H157. The Ca(2+) site is built by E177, N179, T182, and D185. N179 carries an N-linked (GlcNAc...) asparagine glycan. D219 functions as the Charge relay system in the catalytic mechanism. S317 serves as the catalytic Charge relay system.

It belongs to the peptidase S1 family. CLIP subfamily. As to quaternary structure, in the active form, heterodimer of a light chain and a heavy chain; disulfide-linked. In terms of processing, proteolytically cleaved for activation. Cleavage produces a light chain and a catalytic heavy chain which remains covalently associated probably through an interchain disulfide bond. In terms of tissue distribution, in larvae, expressed in the fat body and hemocytes.

The protein resides in the secreted. The protein localises to the cytoplasm. Its activity is regulated as follows. Inhibited by (p-amidinophenyl) methanesulfonyl fluoride, p-nitrophenyl-p'-guanidinobenzoate, D-phenylalanyl-L-prolyl-L-arginyl chloromethane, leupeptin, antipain and to a lesser extent by antithrombin III. Functionally, endopeptidase with selective post-Arg cleavage site. Functions in the innate immune response to fungal and Gram-positive bacterial infections. Upon pathogen infection promotes nodulation; a cellular defense response in which hemocytes surround and isolate invading pathogens forming aggregates called nodules. Involved in activating nodule formation in response to infection with M.luteus, E.coli or S.cerevisiae. Able to bind the microbes M.luteus, E.coli or S.cerevisiae. According to another report, does not bind microorganisms. The protein is CLIP domain-containing serine protease HP8 of Bombyx mori (Silk moth).